A 124-amino-acid polypeptide reads, in one-letter code: Small ribosomal subunit protein uS12 (124 aa).

Residues 1 to 25 (MATINQLVRKPRQATTYKSASPALD) form a disordered region. 3-methylthioaspartic acid is present on Asp-89.

It belongs to the universal ribosomal protein uS12 family. As to quaternary structure, part of the 30S ribosomal subunit. Contacts proteins S8 and S17. May interact with IF1 in the 30S initiation complex.

With S4 and S5 plays an important role in translational accuracy. In terms of biological role, interacts with and stabilizes bases of the 16S rRNA that are involved in tRNA selection in the A site and with the mRNA backbone. Located at the interface of the 30S and 50S subunits, it traverses the body of the 30S subunit contacting proteins on the other side and probably holding the rRNA structure together. The combined cluster of proteins S8, S12 and S17 appears to hold together the shoulder and platform of the 30S subunit. This is Small ribosomal subunit protein uS12 from Xanthomonas campestris pv. campestris (strain 8004).